Here is a 236-residue protein sequence, read N- to C-terminus: Venom metalloproteinase antarease-like TfasMP_A (236 aa).

A Peptidase M12B domain is found at 4-232 (IVVEYYIVTD…KPAASCIFEQ (229 aa)). Histidine 161 serves as a coordination point for Zn(2+). Glutamate 162 is an active-site residue. 2 residues coordinate Zn(2+): histidine 165 and histidine 171.

The protein belongs to the venom metalloproteinase (M12B) family. Requires Zn(2+) as cofactor. In terms of processing, contains several disulfide bonds. Expressed by the venom gland.

It is found in the secreted. Inhibited by EDTA. Functionally, acts as a metalloprotease. Penetrates intact tissue and specifically cleaves the vesicle-associated membrane protein 2 (VAMP2) (part of the SNARE complex) involved in pancreatic secretion, thus disrupting the normal vesicular traffic. The polypeptide is Venom metalloproteinase antarease-like TfasMP_A (Tityus fasciolatus (Central Brazilian scorpion)).